Here is a 506-residue protein sequence, read N- to C-terminus: Cysteine--tRNA ligase (506 aa).

Position 34 (cysteine 34) interacts with Zn(2+). The 'HIGH' region signature appears at 36–46 (PTVYDFAHIGN). Positions 230, 269, and 273 each coordinate Zn(2+). The 'KMSKS' region motif lies at 302–306 (KMSKS). Position 305 (lysine 305) interacts with ATP.

Belongs to the class-I aminoacyl-tRNA synthetase family. In terms of assembly, monomer. Zn(2+) is required as a cofactor.

The protein resides in the cytoplasm. The enzyme catalyses tRNA(Cys) + L-cysteine + ATP = L-cysteinyl-tRNA(Cys) + AMP + diphosphate. This chain is Cysteine--tRNA ligase, found in Brucella abortus (strain S19).